The chain runs to 180 residues: Large ribosomal subunit protein uL5 (180 aa).

The protein belongs to the universal ribosomal protein uL5 family. As to quaternary structure, part of the 50S ribosomal subunit; part of the 5S rRNA/L5/L18/L25 subcomplex. Contacts the 5S rRNA and the P site tRNA. Forms a bridge to the 30S subunit in the 70S ribosome.

Functionally, this is one of the proteins that bind and probably mediate the attachment of the 5S RNA into the large ribosomal subunit, where it forms part of the central protuberance. In the 70S ribosome it contacts protein S13 of the 30S subunit (bridge B1b), connecting the 2 subunits; this bridge is implicated in subunit movement. Contacts the P site tRNA; the 5S rRNA and some of its associated proteins might help stabilize positioning of ribosome-bound tRNAs. In Streptococcus equi subsp. equi (strain 4047), this protein is Large ribosomal subunit protein uL5.